The primary structure comprises 343 residues: MHKIVWFGTLNKSIGYIGKKKTCLLSPCEKICLNSARKTVQRCDKNYSPPKLRRIKNFYTYSVVLGSLFSIVMWAIYKLGKPEEDHRGPIEDEFSQLPWFRQYIMRMWHTLQYYEKMMEEPQMARLLPNVVPPPYIQPPYSLVLEIKDVLVHPDWTYQTGWRFKKRPGVDYFLQQCSRNFEIVIYTSEQGMTAFPLLDALDPYGYIKYRLVRGATDLVEGQHTKNLDYLNRDLSRVIVVDCDPYTTPLHPDNSLVLTKWLGNDDDVQLFDLTAFLQLIAEHQVNDVREVLRYYRQFEDPMEQFKDNQRRLQEQSQESIQNLPTSERQWNLTLLGRSLRGSSIK.

Over 1 to 57 the chain is Mitochondrial matrix; the sequence is MHKIVWFGTLNKSIGYIGKKKTCLLSPCEKICLNSARKTVQRCDKNYSPPKLRRIKN. Residues 58-77 traverse the membrane as a helical segment; it reads FYTYSVVLGSLFSIVMWAIY. Over 78-343 the chain is Mitochondrial intermembrane; the sequence is KLGKPEEDHR…GRSLRGSSIK (266 aa). The FCP1 homology domain occupies 135–278; it reads YIQPPYSLVL…FDLTAFLQLI (144 aa).

The protein belongs to the TIM50 family. In terms of assembly, component of the TIM23 complex at least composed of Tim23, Tim17 (Tim17a1, Tim17a2 or Tim17b1) and a Tim50. In terms of tissue distribution, exclusively expressed in the testis.

The protein localises to the mitochondrion inner membrane. Essential component of the TIM23 complex, a complex that mediates the translocation of transit peptide-containing proteins across the mitochondrial inner membrane. The sequence is that of Mitochondrial import inner membrane translocase subunit TIM50-A (ttm3) from Drosophila melanogaster (Fruit fly).